The following is a 271-amino-acid chain: Acyl-[acyl-carrier-protein]--UDP-N-acetylglucosamine O-acyltransferase (271 aa).

Belongs to the transferase hexapeptide repeat family. LpxA subfamily. Homotrimer.

Its subcellular location is the cytoplasm. The enzyme catalyses a (3R)-hydroxyacyl-[ACP] + UDP-N-acetyl-alpha-D-glucosamine = a UDP-3-O-[(3R)-3-hydroxyacyl]-N-acetyl-alpha-D-glucosamine + holo-[ACP]. Its pathway is glycolipid biosynthesis; lipid IV(A) biosynthesis; lipid IV(A) from (3R)-3-hydroxytetradecanoyl-[acyl-carrier-protein] and UDP-N-acetyl-alpha-D-glucosamine: step 1/6. Its function is as follows. Involved in the biosynthesis of lipid A, a phosphorylated glycolipid that anchors the lipopolysaccharide to the outer membrane of the cell. The chain is Acyl-[acyl-carrier-protein]--UDP-N-acetylglucosamine O-acyltransferase from Rhizobium rhizogenes (strain K84 / ATCC BAA-868) (Agrobacterium radiobacter).